We begin with the raw amino-acid sequence, 72 residues long: NADH dehydrogenase [ubiquinone] 1 beta subcomplex subunit 3-A (72 aa).

Residues 31 to 48 (ALPGIGIGVGAFCVYLVG) traverse the membrane as a helical segment.

Belongs to the complex I NDUFB3 subunit family. Complex I is composed of at least 49 different subunits.

Its subcellular location is the mitochondrion inner membrane. Accessory subunit of the mitochondrial membrane respiratory chain NADH dehydrogenase (Complex I), that is believed not to be involved in catalysis. Complex I functions in the transfer of electrons from NADH to the respiratory chain. The immediate electron acceptor for the enzyme is believed to be ubiquinone. The chain is NADH dehydrogenase [ubiquinone] 1 beta subcomplex subunit 3-A from Arabidopsis thaliana (Mouse-ear cress).